Here is a 291-residue protein sequence, read N- to C-terminus: 5-hydroxytryptamine receptor 1D (291 aa).

Residues 30–54 traverse the membrane as a helical segment; the sequence is LCDIWLSSDITCCTASILHLCVIAL. A disulfide bridge connects residues Cys-31 and Cys-108. The serotonin site is built by Asp-38 and Cys-42. A DRY motif; important for ligand-induced conformation changes motif is present at residues 55 to 57; that stretch reads DRY. Residues 75 to 96 traverse the membrane as a helical segment; sequence AAAMIAIVWAISICISIPPLFW. Asn-111 carries an N-linked (GlcNAc...) asparagine glycan. Helical transmembrane passes span 115–138, 221–246, and 256–279; these read ISYTIYSTCGAFYIPSLLLIILYG, KTLGIILGAFIICWLPFFVASLVLPI, and ALFDFFTWLGYLNSLINPIIYTVF. Ser-241 is a serotonin binding site. An NPxxY motif; important for ligand-induced conformation changes and signaling motif is present at residues 272-276; it reads NPIIY.

This sequence belongs to the G-protein coupled receptor 1 family. In terms of assembly, homodimer. Heterodimer with HTR1B.

Its subcellular location is the cell membrane. G-protein coupled receptor for 5-hydroxytryptamine (serotonin). Also functions as a receptor for ergot alkaloid derivatives, various anxiolytic and antidepressant drugs and other psychoactive substances. Ligand binding causes a conformation change that triggers signaling via guanine nucleotide-binding proteins (G proteins) and modulates the activity of downstream effectors, such as adenylate cyclase. HTR1D is coupled to G(i)/G(o) G alpha proteins and mediates inhibitory neurotransmission by inhibiting adenylate cyclase activity. Regulates the release of 5-hydroxytryptamine in the brain, and thereby affects neural activity. May also play a role in regulating the release of other neurotransmitters. May play a role in vasoconstriction. In Sus scrofa (Pig), this protein is 5-hydroxytryptamine receptor 1D (HTR1D).